Here is a 329-residue protein sequence, read N- to C-terminus: G-protein coupled bile acid receptor 1 (329 aa).

Residues 1–15 (MMTPNSTELSAIPMG) lie on the Extracellular side of the membrane. N-linked (GlcNAc...) asparagine glycosylation occurs at Asn5. Residues 16 to 36 (VLGLSLALASLIVIANLLLAL) form a helical membrane-spanning segment. Topologically, residues 37-49 (GIALDRHLRSPPA) are cytoplasmic. Residues 50–70 (GCFFLSLLLAGLLTGLALPML) form a helical membrane-spanning segment. Residues 71 to 84 (PGLWSRNHQGYWSC) lie on the Extracellular side of the membrane. Cys84 and Cys154 form a disulfide bridge. The chain crosses the membrane as a helical span at residues 85 to 105 (LLLHLTPNFCFLSLLANLLLV). Topologically, residues 106 to 124 (HGERYMAVLQPLRPHGSVR) are cytoplasmic. The helical transmembrane segment at 125 to 145 (LALFLTWVSSLFFASLPALGW) threads the bilayer. At 146–164 (NHWSPDANCSSQAVFPAPY) the chain is on the extracellular side. N-linked (GlcNAc...) asparagine glycosylation is present at Asn153. The chain crosses the membrane as a helical span at residues 165–185 (LYLEVYGLLLPAVGATALLSV). At 186–229 (RVLATAHRQLCEIRRLERAVCRDVPSTLARALTWRQARAQAGAT) the chain is on the cytoplasmic side. A helical membrane pass occupies residues 230-250 (LLFLLCWGPYVATLLLSVLAY). The Extracellular portion of the chain corresponds to 251 to 260 (ERRPPLGPGT). Residues 261-281 (LLSLISLGSTSAAAVPVAMGL) traverse the membrane as a helical segment. The Cytoplasmic segment spans residues 282–329 (GDQRYTAPWRTAAQRCLRVLRGRAKRDNPGPSTAYHTSSQCSIDLDLN).

Belongs to the G-protein coupled receptor 1 family.

The protein resides in the cell membrane. Its function is as follows. Receptor for bile acid. Bile acid-binding induces its internalization, activation of extracellular signal-regulated kinase and intracellular cAMP production. May be involved in the suppression of macrophage functions by bile acids. Involved in bile acid promoted GLP1R secretion. The protein is G-protein coupled bile acid receptor 1 (Gpbar1) of Mus musculus (Mouse).